Here is a 74-residue protein sequence, read N- to C-terminus: Conotoxin AbVII (74 aa).

The signal sequence occupies residues 1–17; sequence VLIIAVLFLTACQLTTA. Residues 18–40 constitute a propeptide that is removed on maturation; it reads ETSSRGKQKHRALRSTDKNSRMT. The interval 19–41 is disordered; the sequence is TSSRGKQKHRALRSTDKNSRMTK. 3 disulfides stabilise this stretch: cysteine 43/cysteine 57, cysteine 50/cysteine 61, and cysteine 56/cysteine 68.

This sequence belongs to the conotoxin O1 superfamily. Expressed by the venom duct.

The protein localises to the secreted. The sequence is that of Conotoxin AbVII from Conus abbreviatus (Abbreviated cone).